Here is a 365-residue protein sequence, read N- to C-terminus: GTPase Obg (365 aa).

Residues 1–177 (MFTDYVRILA…GQFLLELKTI (177 aa)) form the Obg domain. A disordered region spans residues 64–85 (QFAEDGQPGKGQKRKGRDGKNL). The region spanning 178 to 348 (ADVGFVGLPN…FLNSCRKSFE (171 aa)) is the OBG-type G domain. GTP is bound by residues 184-191 (GLPNSGKS), 209-213 (FTTLK), 231-234 (DIPG), 300-303 (NKVD), and 329-331 (SAL). 2 residues coordinate Mg(2+): Ser191 and Thr211.

This sequence belongs to the TRAFAC class OBG-HflX-like GTPase superfamily. OBG GTPase family. As to quaternary structure, monomer. Mg(2+) is required as a cofactor.

The protein resides in the cytoplasm. In terms of biological role, an essential GTPase which binds GTP, GDP and possibly (p)ppGpp with moderate affinity, with high nucleotide exchange rates and a fairly low GTP hydrolysis rate. Plays a role in control of the cell cycle, stress response, ribosome biogenesis and in those bacteria that undergo differentiation, in morphogenesis control. The protein is GTPase Obg of Methylacidiphilum infernorum (isolate V4) (Methylokorus infernorum (strain V4)).